The primary structure comprises 439 residues: Glutamate--tRNA ligase 1 (439 aa).

Residues 6-16 (PSPTGDMHIGN) carry the 'HIGH' region motif. Residues 232–236 (KMSKR) carry the 'KMSKS' region motif. Lys235 contributes to the ATP binding site.

This sequence belongs to the class-I aminoacyl-tRNA synthetase family. Glutamate--tRNA ligase type 1 subfamily. As to quaternary structure, monomer.

The protein localises to the cytoplasm. It carries out the reaction tRNA(Glu) + L-glutamate + ATP = L-glutamyl-tRNA(Glu) + AMP + diphosphate. Its function is as follows. Catalyzes the attachment of glutamate to tRNA(Glu) in a two-step reaction: glutamate is first activated by ATP to form Glu-AMP and then transferred to the acceptor end of tRNA(Glu). In Helicobacter acinonychis (strain Sheeba), this protein is Glutamate--tRNA ligase 1.